Reading from the N-terminus, the 520-residue chain is Keratin, type II cytoskeletal 8 (520 aa).

Residues 1–19 (MSTYSKKTSYTVKSSSSGS) show a composition bias toward low complexity. The disordered stretch occupies residues 1 to 20 (MSTYSKKTSYTVKSSSSGSI). Positions 2–114 (STYSKKTSYT…DPNIQIVRTQ (113 aa)) are head. S28 is subject to Phosphoserine. Residues 115–150 (EKEQIKTLNNRFASFIDKVRFLEQQNKMLETKWSLL) are coil 1A. The 312-residue stretch at 115-426 (EKEQIKTLNN…KLLEGEEDRL (312 aa)) folds into the IF rod domain. The interval 151–166 (QNQTATRSNIDAMFEA) is linker 1. Residues 168 to 259 (IANLRRQLDS…QIFEEEIREL (92 aa)) are coil 1B. The interval 260–283 (QSQIKDTSVVVEMDNSRNLDMDAI) is linker 12. The tract at residues 284-422 (VAEVRAQYED…ATYRKLLEGE (139 aa)) is coil 2. The tract at residues 423-520 (EDRLATGIKA…VSESSEVVQD (98 aa)) is tail.

It belongs to the intermediate filament family. In terms of assembly, heterotetramer of two type I and two type II keratins. Keratin-8 associates with keratin-18. Expressed in simple epithelia.

The protein resides in the cytoplasm. It localises to the nucleus. Its subcellular location is the nucleoplasm. It is found in the nucleus matrix. In terms of biological role, together with KRT19, helps to link the contractile apparatus to dystrophin at the costameres of striated muscle. The chain is Keratin, type II cytoskeletal 8 from Danio rerio (Zebrafish).